The primary structure comprises 219 residues: Ribosome maturation factor RimP (219 aa).

Positions 195–219 are disordered; it reads EGRIPGDDLGAEPEDVASTETQEKK.

This sequence belongs to the RimP family.

It localises to the cytoplasm. Functionally, required for maturation of 30S ribosomal subunits. In Brucella abortus (strain S19), this protein is Ribosome maturation factor RimP.